Here is a 352-residue protein sequence, read N- to C-terminus: Nicotinate-nucleotide--dimethylbenzimidazole phosphoribosyltransferase (352 aa).

Glu318 (proton acceptor) is an active-site residue.

It belongs to the CobT family.

It carries out the reaction 5,6-dimethylbenzimidazole + nicotinate beta-D-ribonucleotide = alpha-ribazole 5'-phosphate + nicotinate + H(+). It functions in the pathway nucleoside biosynthesis; alpha-ribazole biosynthesis; alpha-ribazole from 5,6-dimethylbenzimidazole: step 1/2. Catalyzes the synthesis of alpha-ribazole-5'-phosphate from nicotinate mononucleotide (NAMN) and 5,6-dimethylbenzimidazole (DMB). The sequence is that of Nicotinate-nucleotide--dimethylbenzimidazole phosphoribosyltransferase from Geotalea uraniireducens (strain Rf4) (Geobacter uraniireducens).